We begin with the raw amino-acid sequence, 160 residues long: MLTKGITLILLLVLVHSSHGDSTPNRKFYIPSIRANWFKANEFCNSLKMRLVAIRSQEDNDAVARYVRTTSKFTDNCSFWIGASDLADEGTFVWVATGEEVTYTNWRENEPNNEGGNEDCIQLAYIPALNYHWSWNDNTCAGQSLYFICESVECDCVQPF.

The first 20 residues, 1–20 (MLTKGITLILLLVLVHSSHG), serve as a signal peptide directing secretion. Residues 23 to 140 (TPNRKFYIPS…YHWSWNDNTC (118 aa)) form the C-type lectin domain. Intrachain disulfides connect Cys-44–Cys-140 and Cys-120–Cys-140. N-linked (GlcNAc...) asparagine glycosylation is present at Asn-76.

As to quaternary structure, interacts with putative receptor-type tyrosine-protein phosphatase mosPTP-1; the interaction probably mediates the recruitment of West Nile virus particles in complex with C-type lectin mosGCTL-1 to the cell surface. (Microbial infection) Interacts with envelope protein E and virions of West Nile virus in a calcium-dependent manner. Female salivary gland (at protein level).

The protein localises to the secreted. In terms of biological role, putative lectin. Its function is as follows. (Microbial infection) Facilitates West Nile virus infection in mosquitoes probably via capturing viral particles and presenting them to a ligand on the cell surface, thereby facilitating viral entry. The protein is C-type lectin mosGCTL-1 of Aedes aegypti (Yellowfever mosquito).